We begin with the raw amino-acid sequence, 254 residues long: Ribonuclease HII (254 aa).

An RNase H type-2 domain is found at 46–234 (KLIAGIDEVG…VWMASAPQEV (189 aa)). A divalent metal cation is bound by residues D52, E53, and D144.

The protein belongs to the RNase HII family. Mn(2+) is required as a cofactor. Requires Mg(2+) as cofactor.

Its subcellular location is the cytoplasm. It carries out the reaction Endonucleolytic cleavage to 5'-phosphomonoester.. Its function is as follows. Endonuclease that specifically degrades the RNA of RNA-DNA hybrids. In Koribacter versatilis (strain Ellin345), this protein is Ribonuclease HII.